Consider the following 141-residue polypeptide: Large ribosomal subunit protein uL11 (141 aa).

Belongs to the universal ribosomal protein uL11 family. Part of the ribosomal stalk of the 50S ribosomal subunit. Interacts with L10 and the large rRNA to form the base of the stalk. L10 forms an elongated spine to which L12 dimers bind in a sequential fashion forming a multimeric L10(L12)X complex. One or more lysine residues are methylated.

In terms of biological role, forms part of the ribosomal stalk which helps the ribosome interact with GTP-bound translation factors. This Kosmotoga olearia (strain ATCC BAA-1733 / DSM 21960 / TBF 19.5.1) protein is Large ribosomal subunit protein uL11.